Consider the following 567-residue polypeptide: PCNA-interacting partner (567 aa).

Residues 485–552 form a disordered region; sequence IDLKTAEQVK…GVSRNKASKN (68 aa). 2 stretches are compositionally biased toward polar residues: residues 512–524 and 534–552; these read DIQS…QENE and LTSS…ASKN.

Belongs to the PARI family.

It localises to the cytoplasm. Its subcellular location is the nucleus. Required to suppress inappropriate homologous recombination, thereby playing a central role DNA repair and in the maintenance of genomic stability. The chain is PCNA-interacting partner (parpbp) from Xenopus laevis (African clawed frog).